The following is a 525-amino-acid chain: Chromosomal replication initiator protein DnaA (525 aa).

Residues 1 to 71 (MNDFWQHCSA…ADLAREFWNT (71 aa)) form a domain I, interacts with DnaA modulators region. The domain II stretch occupies residues 71–188 (TPIEVQFVLD…AEADSMYERS (118 aa)). The segment at 160–181 (AAAGRRTWRPGPGAAPANGAEA) is disordered. The span at 169–181 (PGPGAAPANGAEA) shows a compositional bias: low complexity. The tract at residues 189–405 (KLNPVLTFDN…GALRKILAYS (217 aa)) is domain III, AAA+ region. ATP-binding residues include Gly-233, Gly-235, Lys-236, and Thr-237. Residues 406–525 (KFHGREISIE…LHVLEQTLKG (120 aa)) form a domain IV, binds dsDNA region.

Belongs to the DnaA family. In terms of assembly, oligomerizes as a right-handed, spiral filament on DNA at oriC.

It is found in the cytoplasm. Its function is as follows. Plays an essential role in the initiation and regulation of chromosomal replication. ATP-DnaA binds to the origin of replication (oriC) to initiate formation of the DNA replication initiation complex once per cell cycle. Binds the DnaA box (a 9 base pair repeat at the origin) and separates the double-stranded (ds)DNA. Forms a right-handed helical filament on oriC DNA; dsDNA binds to the exterior of the filament while single-stranded (ss)DNA is stabiized in the filament's interior. The ATP-DnaA-oriC complex binds and stabilizes one strand of the AT-rich DNA unwinding element (DUE), permitting loading of DNA polymerase. After initiation quickly degrades to an ADP-DnaA complex that is not apt for DNA replication. Binds acidic phospholipids. The chain is Chromosomal replication initiator protein DnaA from Burkholderia vietnamiensis (strain G4 / LMG 22486) (Burkholderia cepacia (strain R1808)).